Consider the following 708-residue polypeptide: Meiotic sister-chromatid recombination protein 6, mitochondrial (708 aa).

The N-terminal 15 residues, 1–15, are a transit peptide targeting the mitochondrion; that stretch reads MLSVRISARQCSVRG. Positions 19–36 are enriched in polar residues; the sequence is QANNVSQPAKDNATNGSD. Residues 19-44 form a disordered region; sequence QANNVSQPAKDNATNGSDAATEKKGT.

The protein resides in the mitochondrion. Functionally, may be involved in the control of meiotic sister-chromatid recombination. The chain is Meiotic sister-chromatid recombination protein 6, mitochondrial (MSC6) from Kluyveromyces lactis (strain ATCC 8585 / CBS 2359 / DSM 70799 / NBRC 1267 / NRRL Y-1140 / WM37) (Yeast).